The sequence spans 861 residues: ATP-dependent helicase rhp16 (861 aa).

Residues 1-13 show a composition bias toward polar residues; that stretch reads MGTSCNKINSNSN. The disordered stretch occupies residues 1-217; it reads MGTSCNKINS…KSIPSHERTH (217 aa). Composition is skewed to basic and acidic residues over residues 14 to 23 and 38 to 57; these read KGKENMHFVL and VERD…KEFE. Polar residues predominate over residues 60-82; sequence LSTNKKLIIQSNNTSSQHSTPPL. Low complexity predominate over residues 83–95; that stretch reads SISDTSTHTGSST. The span at 96-106 shows a compositional bias: polar residues; sequence DNVEANPNTGF. The span at 109-123 shows a compositional bias: basic residues; the sequence is ARKRSLRSSNLKKKF. Residues 131–145 are compositionally biased toward acidic residues; that stretch reads ESNESEFIDDDESDE. A compositionally biased stretch (low complexity) spans 193-204; sequence ARASSSASSSSR. The Helicase ATP-binding domain maps to 268–442; the sequence is RQEDSSFGGG…FSLLRFLRAD (175 aa). 281 to 288 contacts ATP; sequence DEMGMGKT. The short motif at 393 to 396 is the DEAH box element; sequence DEAH. An RING-type zinc finger spans residues 609–652; it reads CKICDEVAQDAIESRCHHTFCRLCVTEYINAAGDGENVNCPSCF. A Helicase C-terminal domain is found at 695–848; sequence LVEELYLLRK…TIDQDEKALN (154 aa).

It belongs to the SNF2/RAD54 helicase family.

The protein localises to the nucleus. Functionally, involved in global genome repair (GGR) via nucleotide excision repair (NER), in conjunction with rhp7, after UV irradiation. The sequence is that of ATP-dependent helicase rhp16 (rhp16) from Schizosaccharomyces pombe (strain 972 / ATCC 24843) (Fission yeast).